The chain runs to 363 residues: MKNLNKNTKIIVGLSGGVDSSVATLLLLKQGYQVEALFMKNWEEDDKSGYCSVEQDLSDAQKIADKLDVKLHAVNFSADYWNDVFIHFLKEHKKGRTPNPDVLCNQKIKFRVFLEHALSLGADKIATGHYARIAEKNGTYQLKTGLDDSKDQSYFLHLLNQYQLSKSLFPLGEINKIDVRNIAIENGFVTANKKDSTGICFIGERNFSEFLATYLSKQQGDIVDEQGQFIKHHQGLAFYTIGQRKGLKIGGGFGKSGEPWFVADKCIERNELMIVQGNHALLYHQILSASKPHWISTPPTLPLMCSAKIRYRQQSQSCMISQNDNKQIKVVFKQLQRAITPGQSIVFYDNKTCLGGAIIEFRL.

ATP is bound by residues 13-20 (GLSGGVDS) and Met39. The interval 99-101 (NPD) is interaction with target base in tRNA. Cys104 serves as the catalytic Nucleophile. A disulfide bridge connects residues Cys104 and Cys200. Residue Gly128 participates in ATP binding. Residues 150–152 (KDQ) form an interaction with tRNA region. Cys200 serves as the catalytic Cysteine persulfide intermediate. An interaction with tRNA region spans residues 310-311 (RY).

It belongs to the MnmA/TRMU family.

The protein localises to the cytoplasm. It carries out the reaction S-sulfanyl-L-cysteinyl-[protein] + uridine(34) in tRNA + AH2 + ATP = 2-thiouridine(34) in tRNA + L-cysteinyl-[protein] + A + AMP + diphosphate + H(+). Functionally, catalyzes the 2-thiolation of uridine at the wobble position (U34) of tRNA, leading to the formation of s(2)U34. In Ruthia magnifica subsp. Calyptogena magnifica, this protein is tRNA-specific 2-thiouridylase MnmA.